The sequence spans 97 residues: F-actin-capping protein subunit beta (97 aa).

Disordered stretches follow at residues 1–27 (RLPPQQIEKSPWSNKYDPPLEDGAMPS) and 43–66 (KSGSGTMNLGGSLTRQMEKDETVS). The segment covering 43–57 (KSGSGTMNLGGSLTR) has biased composition (polar residues). K97 bears the N6-acetyllysine mark.

Belongs to the F-actin-capping protein beta subunit family. As to quaternary structure, component of the F-actin capping complex, composed of a heterodimer of an alpha and a beta subunit. Subunit of dynactin, a multiprotein complex part of a tripartite complex with dynein and a adapter, such as BICDL1, BICD2 or HOOK3. The dynactin complex is built around ACTR1A/ACTB filament and consists of an actin-related filament composed of a shoulder domain, a pointed end and a barbed end. Its length is defined by its flexible shoulder domain. The soulder is composed of 2 DCTN1 subunits, 4 DCTN2 and 2 DCTN3. The 4 DCNT2 (via N-terminus) bind the ACTR1A filament and act as molecular rulers to determine the length. The pointed end is important for binding dynein-dynactin cargo adapters. Consists of 4 subunits: ACTR10, DCNT4, DCTN5 and DCTN6. The barbed end is composed of a CAPZA1:CAPZB heterodimers, which binds ACTR1A/ACTB filament and dynactin and stabilizes dynactin. Interacts with ARHGAP17. Interaction with RCSD1/CAPZIP. Component of the WASH complex, composed of F-actin-capping protein subunit alpha (CAPZA1, CAPZA2 or CAPZA3), F-actin-capping protein subunit beta (CAPZB), WASH (WASHC1, WASH2P, WASH3P, WASH4P, WASH5P or WASH6P), WASHC2 (WASHC2A or WASHC2C), WASHC3, WASHC4 and WASHC5. Interacts with ACTG1. Directly interacts with CRACD; this interaction decreases binding to actin.

Its subcellular location is the cytoplasm. The protein localises to the cytoskeleton. It is found in the myofibril. It localises to the sarcomere. In terms of biological role, F-actin-capping proteins bind in a Ca(2+)-independent manner to the fast growing ends of actin filaments (barbed end) thereby blocking the exchange of subunits at these ends. Unlike other capping proteins (such as gelsolin and severin), these proteins do not sever actin filaments. Plays a role in the regulation of cell morphology and cytoskeletal organization. Forms, with CAPZB, the barbed end of the fast growing ends of actin filaments in the dynactin complex and stabilizes dynactin structure. The dynactin multiprotein complex activates the molecular motor dynein for ultra-processive transport along microtubules. This Mesocricetus auratus (Golden hamster) protein is F-actin-capping protein subunit beta.